Reading from the N-terminus, the 312-residue chain is DNA-directed RNA polymerase subunit alpha (312 aa).

Residues 1–226 (MIEFEKPNIT…EHFKVFMSTD (226 aa)) form an alpha N-terminal domain (alpha-NTD) region. The interval 243–312 (NEKKLEMTIE…ELGLSLRQDD (70 aa)) is alpha C-terminal domain (alpha-CTD).

Belongs to the RNA polymerase alpha chain family. Homodimer. The RNAP catalytic core consists of 2 alpha, 1 beta, 1 beta' and 1 omega subunit. When a sigma factor is associated with the core the holoenzyme is formed, which can initiate transcription.

It carries out the reaction RNA(n) + a ribonucleoside 5'-triphosphate = RNA(n+1) + diphosphate. DNA-dependent RNA polymerase catalyzes the transcription of DNA into RNA using the four ribonucleoside triphosphates as substrates. In Lactobacillus gasseri (strain ATCC 33323 / DSM 20243 / BCRC 14619 / CIP 102991 / JCM 1131 / KCTC 3163 / NCIMB 11718 / NCTC 13722 / AM63), this protein is DNA-directed RNA polymerase subunit alpha.